Here is a 120-residue protein sequence, read N- to C-terminus: Ribonuclease P protein component 2 (120 aa).

This sequence belongs to the eukaryotic/archaeal RNase P protein component 2 family. Consists of a catalytic RNA component and at least 4-5 protein subunits.

It is found in the cytoplasm. The catalysed reaction is Endonucleolytic cleavage of RNA, removing 5'-extranucleotides from tRNA precursor.. Part of ribonuclease P, a protein complex that generates mature tRNA molecules by cleaving their 5'-ends. The chain is Ribonuclease P protein component 2 from Methanobrevibacter smithii (strain ATCC 35061 / DSM 861 / OCM 144 / PS).